Consider the following 905-residue polypeptide: Sun domain-containing protein 1 (905 aa).

Disordered regions lie at residues 1–21, 41–166, and 207–242; these read MSGD…LPLQ, NNTV…ILKQ, and QQQQ…IDNN. Topologically, residues 1 to 290 are nuclear; the sequence is MSGDYKPNYQ…NNNNKVNFKQ (290 aa). Composition is skewed to low complexity over residues 41-67 and 75-101; these read NNTV…SSYL and SNQI…ASSS. The segment covering 107-116 has biased composition (basic and acidic residues); that stretch reads KVDHNSHNNN. The span at 117-126 shows a compositional bias: acidic residues; that stretch reads DDDDIEDDVD. Over residues 129-146 the composition is skewed to polar residues; sequence YSTNNASSNILHNRFSNS. Positions 170–221 form a coiled coil; that stretch reads LYNHLNNQIQQQQQQQQQQQQQQQQQQQQQQQQQQQQQQQQQQQRNNNNNSN. A compositionally biased stretch (low complexity) spans 207 to 227; it reads QQQQQQQRNNNNNSNSSNNNN. A helical membrane pass occupies residues 291-311; that stretch reads AIWIFIFSVLFIGCLLGLFST. The Perinuclear space segment spans residues 312–905; that stretch reads NFYGIHIYFP…IEKQQQSDEL (594 aa). Coiled coils occupy residues 359-456 and 504-609; these read KKNE…QLIQ and REFN…TQQF. Residues 662-860 enclose the SUN domain; it reads GASIEYNALH…YRFRVHGYQI (199 aa). Residues 864 to 901 are a coiled coil; it reads EQEQIQIIQEEQSFKQEEINQQQIEQIEQIEQIEKQQQ.

As to quaternary structure, homodimer and homooligomer.

Its subcellular location is the nucleus membrane. In terms of biological role, may have an important role in defining the spacing of the nuclear envelope lumen. Essential for centrosome attachment to the nucleus, maintenance of correct ploidy, proper mitosis, association of the centromere cluster with the centrosome and the maintenance of genome stability. Requires direct chromatin binding for inner nuclear membrane targeting. This is Sun domain-containing protein 1 (sun1) from Dictyostelium discoideum (Social amoeba).